We begin with the raw amino-acid sequence, 447 residues long: DNA primase DnaG (447 aa).

In terms of domain architecture, Toprim spans Asp-200–Glu-274. Glu-206, Asp-248, and Asp-250 together coordinate Mg(2+).

The protein belongs to the archaeal DnaG primase family. In terms of assembly, forms a ternary complex with MCM helicase and DNA. Component of the archaeal exosome complex. It depends on Mg(2+) as a cofactor.

It carries out the reaction ssDNA + n NTP = ssDNA/pppN(pN)n-1 hybrid + (n-1) diphosphate.. Functionally, RNA polymerase that catalyzes the synthesis of short RNA molecules used as primers for DNA polymerase during DNA replication. Also part of the exosome, which is a complex involved in RNA degradation. Acts as a poly(A)-binding protein that enhances the interaction between heteromeric, adenine-rich transcripts and the exosome. The chain is DNA primase DnaG from Pyrococcus horikoshii (strain ATCC 700860 / DSM 12428 / JCM 9974 / NBRC 100139 / OT-3).